A 215-amino-acid chain; its full sequence is Glutathione S-transferase D6 (215 aa).

Residues 1–80 (MDLYNMSGSP…YLVEQYGKDD (80 aa)) form the GST N-terminal domain. Residues Ser9, 50–52 (HTI), and 64–66 (ETR) contribute to the glutathione site. Positions 86 to 206 (DPQKQALINQ…LARIQSAKKF (121 aa)) constitute a GST C-terminal domain.

Belongs to the GST superfamily. Delta family. Homodimer.

It carries out the reaction RX + glutathione = an S-substituted glutathione + a halide anion + H(+). Conjugation of reduced glutathione to a wide number of exogenous and endogenous hydrophobic electrophiles. May be involved in detoxification. The chain is Glutathione S-transferase D6 from Drosophila melanogaster (Fruit fly).